Here is a 68-residue protein sequence, read N- to C-terminus: Small ribosomal subunit protein eS17 (68 aa).

Belongs to the eukaryotic ribosomal protein eS17 family.

The chain is Small ribosomal subunit protein eS17 from Staphylothermus marinus (strain ATCC 43588 / DSM 3639 / JCM 9404 / F1).